The primary structure comprises 193 residues: Chromophore lyase CpcS/CpeS 4 (193 aa).

Belongs to the CpcS/CpeS biliprotein lyase family.

Its function is as follows. Covalently attaches a chromophore to Cys residue(s) of phycobiliproteins. The chain is Chromophore lyase CpcS/CpeS 4 from Trichodesmium erythraeum (strain IMS101).